The chain runs to 458 residues: Succinate-semialdehyde dehydrogenase [NADP(+)] 1 (458 aa).

NADP(+) contacts are provided by residues 134–135, 158–161, and 210–211; these read WN, KHAS, and GS. Glutamate 232 functions as the Proton acceptor in the catalytic mechanism. NADP(+) is bound at residue leucine 233. Catalysis depends on cysteine 266, which acts as the Nucleophile. Glutamate 363 is an NADP(+) binding site.

This sequence belongs to the aldehyde dehydrogenase family.

The enzyme catalyses succinate semialdehyde + NADP(+) + H2O = succinate + NADPH + 2 H(+). Catalyzes the NADP(+)-dependent oxidation of succinate semialdehyde to succinate. It is believed to be the main source of succinate semialdehyde dehydrogenase activity in Mycobacterium. This chain is Succinate-semialdehyde dehydrogenase [NADP(+)] 1 (gabD1), found in Mycobacterium ulcerans (strain Agy99).